The chain runs to 277 residues: Phosphatidylglycerol--prolipoprotein diacylglyceryl transferase (277 aa).

A run of 4 helical transmembrane segments spans residues 16–36, 58–78, 93–113, and 119–139; these read LGPI…LFGW, FLTW…VLFY, IWSG…AILL, and GFSP…GLFL. Arg-141 contributes to the a 1,2-diacyl-sn-glycero-3-phospho-(1'-sn-glycerol) binding site. 3 helical membrane passes run 182 to 202, 207 to 227, and 239 to 259; these read AALE…KPAV, GTLS…GEVF, and FGVT…LWIL.

Belongs to the Lgt family.

It localises to the cell inner membrane. It catalyses the reaction L-cysteinyl-[prolipoprotein] + a 1,2-diacyl-sn-glycero-3-phospho-(1'-sn-glycerol) = an S-1,2-diacyl-sn-glyceryl-L-cysteinyl-[prolipoprotein] + sn-glycerol 1-phosphate + H(+). Its pathway is protein modification; lipoprotein biosynthesis (diacylglyceryl transfer). In terms of biological role, catalyzes the transfer of the diacylglyceryl group from phosphatidylglycerol to the sulfhydryl group of the N-terminal cysteine of a prolipoprotein, the first step in the formation of mature lipoproteins. The protein is Phosphatidylglycerol--prolipoprotein diacylglyceryl transferase of Rhodospirillum centenum (strain ATCC 51521 / SW).